A 388-amino-acid polypeptide reads, in one-letter code: MRLTTVQRRFLVSTKAKVSGASISSTANTGSASAGAPNGQTRRRRRITEFKDALNLGPSFEDFVSGRAAGFTVVDPLEQMRQDREEYKKLPKWLKVPIPKGVNYHKLKKDVKELKLSTVCEEARCPNIGECWGGKDKSKATATIMLLGDTCTRGCRFCSVKTNRNPAKPDPTEPENTAEAISRWGLGYVVLTTVDRDDLPDGGAHHLAETVIKIKQKAPKTLVEALTGDFLGNLEMVDVMAKSGLDVYAHNLETVEALTPHVRDRRAGYRQSLNVLKRAKETVPSLITKTSVMLGLGETDDQIIQTMQDLRAINCDVITFGQYMRPTKRHMKVVEYVRPEKFDYWKDKAKEMGFLYCASGPLVRSSYKAGEAFIENVLNKRKQDNKRI.

A mitochondrion-targeting transit peptide spans 1–18 (MRLTTVQRRFLVSTKAKV). Residues 22-39 (SISSTANTGSASAGAPNG) are compositionally biased toward low complexity. Positions 22–43 (SISSTANTGSASAGAPNGQTRR) are disordered. Positions 120, 125, 131, 151, 155, 158, and 366 each coordinate [4Fe-4S] cluster. Positions 134–355 (GKDKSKATAT…KDKAKEMGFL (222 aa)) constitute a Radical SAM core domain.

It belongs to the radical SAM superfamily. Lipoyl synthase family. It depends on [4Fe-4S] cluster as a cofactor.

It is found in the mitochondrion. It carries out the reaction [[Fe-S] cluster scaffold protein carrying a second [4Fe-4S](2+) cluster] + N(6)-octanoyl-L-lysyl-[protein] + 2 oxidized [2Fe-2S]-[ferredoxin] + 2 S-adenosyl-L-methionine + 4 H(+) = [[Fe-S] cluster scaffold protein] + N(6)-[(R)-dihydrolipoyl]-L-lysyl-[protein] + 4 Fe(3+) + 2 hydrogen sulfide + 2 5'-deoxyadenosine + 2 L-methionine + 2 reduced [2Fe-2S]-[ferredoxin]. It functions in the pathway protein modification; protein lipoylation via endogenous pathway; protein N(6)-(lipoyl)lysine from octanoyl-[acyl-carrier-protein]: step 2/2. Functionally, catalyzes the radical-mediated insertion of two sulfur atoms into the C-6 and C-8 positions of the octanoyl moiety bound to the lipoyl domains of lipoate-dependent enzymes, thereby converting the octanoylated domains into lipoylated derivatives. The chain is Lipoyl synthase, mitochondrial from Candida glabrata (strain ATCC 2001 / BCRC 20586 / JCM 3761 / NBRC 0622 / NRRL Y-65 / CBS 138) (Yeast).